Reading from the N-terminus, the 262-residue chain is MSDVLTRICDDKRALVQARKSARPLSAVEDDARSADPAGGFIRALRRTVDGGRYGLIAEIKKASPSKGLIRPDFDPPSLARAYRGGGATCLSVLTDEPYFQGCDDYLLSARAAVDLPVLRKDFMVDPYQIAESRALGADCILIIMAALSDAQAVEIEDAAIAWGLDVLVEVHNREELDRALALKTPLLGVNNRNLKTLAVDIATTEELAAHVPADRMLVAESGLYSPADLSRMAAVGARCFLVGESLMRQEDVSAATRALLA.

Belongs to the TrpC family.

The catalysed reaction is 1-(2-carboxyphenylamino)-1-deoxy-D-ribulose 5-phosphate + H(+) = (1S,2R)-1-C-(indol-3-yl)glycerol 3-phosphate + CO2 + H2O. It participates in amino-acid biosynthesis; L-tryptophan biosynthesis; L-tryptophan from chorismate: step 4/5. Functionally, participates in the tryptophan-dependent indole-3-acetic acid production, which is a phytohormone released by A.brasilense. The protein is Indole-3-glycerol phosphate synthase (trpC) of Azospirillum brasilense.